A 120-amino-acid polypeptide reads, in one-letter code: NAD(P)H-quinone oxidoreductase subunit 3, chloroplastic (120 aa).

Transmembrane regions (helical) follow at residues 10-30 (FWAF…ISGV), 64-84 (MFAL…PWAM), and 88-108 (VLGV…IGGL).

It belongs to the complex I subunit 3 family. As to quaternary structure, NDH is composed of at least 16 different subunits, 5 of which are encoded in the nucleus.

The protein localises to the plastid. Its subcellular location is the chloroplast thylakoid membrane. It catalyses the reaction a plastoquinone + NADH + (n+1) H(+)(in) = a plastoquinol + NAD(+) + n H(+)(out). The enzyme catalyses a plastoquinone + NADPH + (n+1) H(+)(in) = a plastoquinol + NADP(+) + n H(+)(out). NDH shuttles electrons from NAD(P)H:plastoquinone, via FMN and iron-sulfur (Fe-S) centers, to quinones in the photosynthetic chain and possibly in a chloroplast respiratory chain. The immediate electron acceptor for the enzyme in this species is believed to be plastoquinone. Couples the redox reaction to proton translocation, and thus conserves the redox energy in a proton gradient. This Ipomoea purpurea (Common morning glory) protein is NAD(P)H-quinone oxidoreductase subunit 3, chloroplastic.